Reading from the N-terminus, the 450-residue chain is uncharacterized protein (450 aa).

N6-(pyridoxal phosphate)lysine is present on lysine 283.

The protein belongs to the class-III pyridoxal-phosphate-dependent aminotransferase family. Requires pyridoxal 5'-phosphate as cofactor.

In terms of biological role, essential for glycerol catabolism. This is an uncharacterized protein from Bacillus subtilis (strain 168).